A 481-amino-acid chain; its full sequence is Cobyric acid synthase (481 aa).

A GATase cobBQ-type domain is found at 247–433 (AFNVVVPLLP…LHGLFDVPDS (187 aa)). The active-site Nucleophile is Cys-328. Residue His-425 is part of the active site.

This sequence belongs to the CobB/CobQ family. CobQ subfamily.

It functions in the pathway cofactor biosynthesis; adenosylcobalamin biosynthesis. Its function is as follows. Catalyzes amidations at positions B, D, E, and G on adenosylcobyrinic A,C-diamide. NH(2) groups are provided by glutamine, and one molecule of ATP is hydrogenolyzed for each amidation. This Alcanivorax borkumensis (strain ATCC 700651 / DSM 11573 / NCIMB 13689 / SK2) protein is Cobyric acid synthase.